A 482-amino-acid polypeptide reads, in one-letter code: U2 small nuclear ribonucleoprotein auxiliary factor 35 kDa subunit-related protein 2 (482 aa).

A disordered region spans residues 1 to 59 (MAAPEKMTFPEKPSHKKYRAALKKEKRKKRRQELARLRDSGLSQKEEEEDTFIEEQQLE). A compositionally biased stretch (basic residues) spans 14 to 31 (SHKKYRAALKKEKRKKRR). Residue Lys-45 forms a Glycyl lysine isopeptide (Lys-Gly) (interchain with G-Cter in SUMO2) linkage. Over residues 46-58 (EEEEDTFIEEQQL) the composition is skewed to acidic residues. A Glycyl lysine isopeptide (Lys-Gly) (interchain with G-Cter in SUMO2) cross-link involves residue Lys-62. Positions 115–135 (QRKEREEEEQKRQEKKEKEEA) are disordered. The segment at 166–194 (EKDRANCPFYSKTGACRFGDRCSRKHNFP) adopts a C3H1-type 1 zinc-finger fold. Residues 198–304 (PTLLIKSMFT…RQLQCEFCPV (107 aa)) enclose the RRM domain. Residues 306 to 333 (RWKMAICGLFEIQQCPRGKHCNFLHVFR) form a C3H1-type 2 zinc finger. Ser-349 bears the Phosphoserine mark. The tract at residues 351–482 (DRTGSSFGKN…DRTVQSPKSK (132 aa)) is disordered. Basic and acidic residues-rich tracts occupy residues 360-375 (NSER…DYYS) and 383-398 (PSPD…SERK). Ser-384 is subject to Phosphoserine. Residues 399–412 (SSRHRGKKSHKRTS) are compositionally biased toward basic residues. Residues 413–435 (KSRERHNSRSRGRNRDRSRDRSR) show a composition bias toward basic and acidic residues. A compositionally biased stretch (basic residues) spans 436 to 454 (GRGSRSRSRSRSRRSRRSR).

In terms of assembly, component of the U11/U12 snRNPs that are part of the U12-type spliceosome. Interacts (via RS domain) with SRSF1 and SRSF2. Interacts with U2AF2/U2AF65. Post-translationally, phosphorylated in the RS domain by SRPK1. In terms of tissue distribution, widely expressed.

Its subcellular location is the nucleus. Functionally, pre-mRNA-binding protein required for splicing of both U2- and U12-type introns. Selectively interacts with the 3'-splice site of U2- and U12-type pre-mRNAs and promotes different steps in U2 and U12 intron splicing. Recruited to U12 pre-mRNAs in an ATP-dependent manner and is required for assembly of the pre-spliceosome, a precursor to other spliceosomal complexes. For U2-type introns, it is selectively and specifically required for the second step of splicing. The chain is U2 small nuclear ribonucleoprotein auxiliary factor 35 kDa subunit-related protein 2 (ZRSR2) from Homo sapiens (Human).